We begin with the raw amino-acid sequence, 174 residues long: Myeloid-derived growth factor (174 aa).

Residues 1 to 32 form the signal peptide; that stretch reads MAAPSGRRNGSGGANLWVSLLLAAAALRPVET.

Belongs to the MYDGF family.

It is found in the secreted. The protein resides in the endoplasmic reticulum-Golgi intermediate compartment. Its subcellular location is the endoplasmic reticulum. It localises to the golgi apparatus. Its function is as follows. Bone marrow-derived monocyte and paracrine-acting protein that promotes cardiac myocyte survival and adaptive angiogenesis for cardiac protection and/or repair after myocardial infarction (MI). Stimulates endothelial cell proliferation through a MAPK1/3-, STAT3- and CCND1-mediated signaling pathway. Inhibits cardiac myocyte apoptosis in a PI3K/AKT-dependent signaling pathway. This is Myeloid-derived growth factor from Bos taurus (Bovine).